Here is a 156-residue protein sequence, read N- to C-terminus: Small ribosomal subunit protein uS7 (156 aa).

The protein belongs to the universal ribosomal protein uS7 family. In terms of assembly, part of the 30S ribosomal subunit. Contacts proteins S9 and S11.

In terms of biological role, one of the primary rRNA binding proteins, it binds directly to 16S rRNA where it nucleates assembly of the head domain of the 30S subunit. Is located at the subunit interface close to the decoding center, probably blocks exit of the E-site tRNA. This Dechloromonas aromatica (strain RCB) protein is Small ribosomal subunit protein uS7.